The chain runs to 81 residues: Photosystem I iron-sulfur center (81 aa).

4Fe-4S ferredoxin-type domains are found at residues 2–31 (AHTV…MVPW) and 37–68 (GQIA…IRVY). Residues C11, C14, C17, C21, C48, C51, C54, and C58 each contribute to the [4Fe-4S] cluster site.

In terms of assembly, the cyanobacterial PSI reaction center is composed of one copy each of PsaA,B,C,D,E,F,I,J,K,L,M and X, and forms trimeric complexes. Requires [4Fe-4S] cluster as cofactor.

The protein localises to the cellular thylakoid membrane. It carries out the reaction reduced [plastocyanin] + hnu + oxidized [2Fe-2S]-[ferredoxin] = oxidized [plastocyanin] + reduced [2Fe-2S]-[ferredoxin]. Its function is as follows. Apoprotein for the two 4Fe-4S centers FA and FB of photosystem I (PSI); essential for photochemical activity. FB is the terminal electron acceptor of PSI, donating electrons to ferredoxin. The C-terminus interacts with PsaA/B/D and helps assemble the protein into the PSI complex. Required for binding of PsaD and PsaE to PSI. PSI is a plastocyanin/cytochrome c6-ferredoxin oxidoreductase, converting photonic excitation into a charge separation, which transfers an electron from the donor P700 chlorophyll pair to the spectroscopically characterized acceptors A0, A1, FX, FA and FB in turn. This Synechococcus elongatus protein is Photosystem I iron-sulfur center (psaC).